The following is a 969-amino-acid chain: Protein translocase subunit SecA (969 aa).

ATP-binding positions include Gln-99, 117 to 121, and Asp-631; that span reads GEGKT.

This sequence belongs to the SecA family. Monomer and homodimer. Part of the essential Sec protein translocation apparatus which comprises SecA, SecYEG and auxiliary proteins SecDF. Other proteins may also be involved.

It localises to the cell inner membrane. Its subcellular location is the cytoplasm. The catalysed reaction is ATP + H2O + cellular proteinSide 1 = ADP + phosphate + cellular proteinSide 2.. Part of the Sec protein translocase complex. Interacts with the SecYEG preprotein conducting channel. Has a central role in coupling the hydrolysis of ATP to the transfer of proteins into and across the cell membrane, serving as an ATP-driven molecular motor driving the stepwise translocation of polypeptide chains across the membrane. The chain is Protein translocase subunit SecA from Chlamydia abortus (strain DSM 27085 / S26/3) (Chlamydophila abortus).